The chain runs to 180 residues: MAQRFKELYLQTIVPKLKDEFGYKNSHQVPEIKKIVINRGLGDASQNAKILDSSLNELSIIAGQRGVVTRSKKAIAGFKLRDKMAVGISVTLRGDRMYSFLDRLINLALPRIRDFQGISPKSFDGCGNYSLGLEEQLMFPEIDYDKIDQVRGMDISIVTTCSNNEEGVALLKNFGMPFKA.

The protein belongs to the universal ribosomal protein uL5 family. As to quaternary structure, part of the 50S ribosomal subunit; contacts the 5S rRNA.

It localises to the plastid. The protein resides in the chloroplast. Functionally, binds 5S rRNA, forms part of the central protuberance of the 50S subunit. This is Large ribosomal subunit protein uL5c (rpl5) from Oltmannsiellopsis viridis (Marine flagellate).